The primary structure comprises 145 residues: D-aminoacyl-tRNA deacylase (145 aa).

Residues 137-138 carry the Gly-cisPro motif, important for rejection of L-amino acids motif; sequence GP.

Belongs to the DTD family. As to quaternary structure, homodimer.

The protein resides in the cytoplasm. The enzyme catalyses glycyl-tRNA(Ala) + H2O = tRNA(Ala) + glycine + H(+). It catalyses the reaction a D-aminoacyl-tRNA + H2O = a tRNA + a D-alpha-amino acid + H(+). In terms of biological role, an aminoacyl-tRNA editing enzyme that deacylates mischarged D-aminoacyl-tRNAs. Also deacylates mischarged glycyl-tRNA(Ala), protecting cells against glycine mischarging by AlaRS. Acts via tRNA-based rather than protein-based catalysis; rejects L-amino acids rather than detecting D-amino acids in the active site. By recycling D-aminoacyl-tRNA to D-amino acids and free tRNA molecules, this enzyme counteracts the toxicity associated with the formation of D-aminoacyl-tRNA entities in vivo and helps enforce protein L-homochirality. The chain is D-aminoacyl-tRNA deacylase from Pseudoalteromonas atlantica (strain T6c / ATCC BAA-1087).